The sequence spans 264 residues: Thymidylate synthase (264 aa).

DUMP-binding positions include arginine 21 and 126-127 (RR). The active-site Nucleophile is cysteine 146. Residues 166–169 (RSAD), asparagine 177, and 207–209 (HLY) contribute to the dUMP site. Aspartate 169 is a (6R)-5,10-methylene-5,6,7,8-tetrahydrofolate binding site. Alanine 263 is a binding site for (6R)-5,10-methylene-5,6,7,8-tetrahydrofolate.

The protein belongs to the thymidylate synthase family. Bacterial-type ThyA subfamily. In terms of assembly, homodimer.

Its subcellular location is the cytoplasm. The catalysed reaction is dUMP + (6R)-5,10-methylene-5,6,7,8-tetrahydrofolate = 7,8-dihydrofolate + dTMP. It participates in pyrimidine metabolism; dTTP biosynthesis. In terms of biological role, catalyzes the reductive methylation of 2'-deoxyuridine-5'-monophosphate (dUMP) to 2'-deoxythymidine-5'-monophosphate (dTMP) while utilizing 5,10-methylenetetrahydrofolate (mTHF) as the methyl donor and reductant in the reaction, yielding dihydrofolate (DHF) as a by-product. This enzymatic reaction provides an intracellular de novo source of dTMP, an essential precursor for DNA biosynthesis. The sequence is that of Thymidylate synthase from Halorhodospira halophila (strain DSM 244 / SL1) (Ectothiorhodospira halophila (strain DSM 244 / SL1)).